A 362-amino-acid polypeptide reads, in one-letter code: 3-isopropylmalate dehydrogenase (362 aa).

78–91 (GPKWETLPPDEQPE) lines the NAD(+) pocket. Substrate is bound by residues arginine 99, arginine 109, arginine 138, and aspartate 227. Residues aspartate 227, aspartate 251, and aspartate 255 each coordinate Mg(2+). 285–297 (GSAPDIAGQGIAN) is a binding site for NAD(+).

The protein belongs to the isocitrate and isopropylmalate dehydrogenases family. LeuB type 1 subfamily. As to quaternary structure, homodimer. Requires Mg(2+) as cofactor. Mn(2+) is required as a cofactor.

The protein resides in the cytoplasm. The enzyme catalyses (2R,3S)-3-isopropylmalate + NAD(+) = 4-methyl-2-oxopentanoate + CO2 + NADH. Its pathway is amino-acid biosynthesis; L-leucine biosynthesis; L-leucine from 3-methyl-2-oxobutanoate: step 3/4. Functionally, catalyzes the oxidation of 3-carboxy-2-hydroxy-4-methylpentanoate (3-isopropylmalate) to 3-carboxy-4-methyl-2-oxopentanoate. The product decarboxylates to 4-methyl-2 oxopentanoate. The protein is 3-isopropylmalate dehydrogenase of Geobacter metallireducens (strain ATCC 53774 / DSM 7210 / GS-15).